A 294-amino-acid chain; its full sequence is Ribosomal RNA small subunit methyltransferase H (294 aa).

S-adenosyl-L-methionine is bound by residues glycine 36–histidine 38, aspartate 55, phenylalanine 82, aspartate 97, and glutamine 104.

Belongs to the methyltransferase superfamily. RsmH family.

Its subcellular location is the cytoplasm. It carries out the reaction cytidine(1402) in 16S rRNA + S-adenosyl-L-methionine = N(4)-methylcytidine(1402) in 16S rRNA + S-adenosyl-L-homocysteine + H(+). Its function is as follows. Specifically methylates the N4 position of cytidine in position 1402 (C1402) of 16S rRNA. In Synechococcus sp. (strain CC9605), this protein is Ribosomal RNA small subunit methyltransferase H.